A 219-amino-acid chain; its full sequence is Uracil-DNA glycosylase (219 aa).

The Proton acceptor role is filled by aspartate 61.

It belongs to the uracil-DNA glycosylase (UDG) superfamily. UNG family.

The protein resides in the cytoplasm. The catalysed reaction is Hydrolyzes single-stranded DNA or mismatched double-stranded DNA and polynucleotides, releasing free uracil.. In terms of biological role, excises uracil residues from the DNA which can arise as a result of misincorporation of dUMP residues by DNA polymerase or due to deamination of cytosine. In Neisseria meningitidis serogroup B (strain ATCC BAA-335 / MC58), this protein is Uracil-DNA glycosylase.